We begin with the raw amino-acid sequence, 471 residues long: Fructokinase-like 1, chloroplastic (471 aa).

Residues 1–38 (MASLLIFPHLHHFDSSLDRREVLVVRHSQASRRFLTPK) constitute a chloroplast transit peptide. The disordered stretch occupies residues 36 to 85 (TPKASINGSGITNGAAAETTSKPSRKGRKKKQTSTVIEKDNTETDPELNP). Over residues 39–57 (ASINGSGITNGAAAETTSK) the composition is skewed to polar residues. Basic residues predominate over residues 58–67 (PSRKGRKKKQ).

This sequence belongs to the carbohydrate kinase PfkB family. In terms of assembly, interacts with CITRX/TRXz. Interacts with PTAC7. Self-interacts. Binds to FLN2. Associates with the plastid-encoded RNA polymerase (PEP) complex.

Its subcellular location is the plastid. It localises to the chloroplast. Its function is as follows. Required for proper chloroplast development, most likely through regulating plastid-encoded polymerase (PEP) dependent chloroplast transcription. Acts as a component of the transcriptionally active plastid chromosome that is required for plastid gene expression. The protein is Fructokinase-like 1, chloroplastic of Arabidopsis thaliana (Mouse-ear cress).